The chain runs to 398 residues: DnaJ-like protein R260 (398 aa).

Positions 7–72 (DLYEILGLTP…EKRRVYDQYG (66 aa)) constitute a J domain. Residues 118–202 (KKTVKVTITV…CKGAGINKSE (85 aa)) form a CR-type zinc finger. CXXCXGXG motif repeat units lie at residues 131-138 (CDDCDATG), 147-154 (CKVCRGKG), 173-180 (CHGCQGKK), and 190-197 (CPSCKGAG). A disordered region spans residues 364-398 (LRQINTDPSDESQDRDSEESYGGHGRPEGVGCAQQ). Residues 371–382 (PSDESQDRDSEE) show a composition bias toward acidic residues.

Zn(2+) serves as cofactor.

The sequence is that of DnaJ-like protein R260 from Acanthamoeba polyphaga mimivirus (APMV).